Consider the following 289-residue polypeptide: Small ribosomal subunit protein uS2C (289 aa).

The protein belongs to the universal ribosomal protein uS2 family. Component of the small ribosomal subunit. Mature ribosomes consist of a small (40S) and a large (60S) subunit. The 40S subunit contains about 33 different proteins and 1 molecule of RNA (18S). The 60S subunit contains about 49 different proteins and 3 molecules of RNA (25S, 5.8S and 5S). Interacts with rps21.

The protein resides in the cytoplasm. Required for the assembly and/or stability of the 40S ribosomal subunit. Required for the processing of the 20S rRNA-precursor to mature 18S rRNA in a late step of the maturation of 40S ribosomal subunits. This chain is Small ribosomal subunit protein uS2C (rps0c), found in Schizosaccharomyces japonicus (strain yFS275 / FY16936) (Fission yeast).